Reading from the N-terminus, the 1331-residue chain is Alpha,alpha-trehalose-phosphate synthase [UDP-forming] 1 (1331 aa).

The segment covering Met1–Asn13 has biased composition (polar residues). Disordered stretches follow at residues Met1 to Pro50, Thr71 to Leu118, and Pro1312 to Asn1331. Basic and acidic residues predominate over residues Asp39 to Pro50. Over residues Leu77–Gly98 the composition is skewed to acidic residues. Residues Asn102 to Asp112 show a composition bias toward basic and acidic residues. The segment covering Ser1318–Asn1331 has biased composition (polar residues).

In the N-terminal section; belongs to the glycosyltransferase 20 family. The protein in the C-terminal section; belongs to the gob-1 trehalose phosphatase family.

It carries out the reaction D-glucose 6-phosphate + UDP-alpha-D-glucose = alpha,alpha-trehalose 6-phosphate + UDP + H(+). Catalyzes the production of trehalose from glucose-6-phosphate and UDP-alpha-D-glucose in a 2 step process. The polypeptide is Alpha,alpha-trehalose-phosphate synthase [UDP-forming] 1 (tps-1) (Caenorhabditis elegans).